Consider the following 242-residue polypeptide: Uroporphyrinogen-III C-methyltransferase (242 aa).

S-adenosyl-L-homocysteine is bound by residues P12, 88–90, 118–119, and M170; these read GGD and TS.

This sequence belongs to the precorrin methyltransferase family. Homodimer.

It carries out the reaction uroporphyrinogen III + 2 S-adenosyl-L-methionine = precorrin-2 + 2 S-adenosyl-L-homocysteine + H(+). It participates in cofactor biosynthesis; adenosylcobalamin biosynthesis; precorrin-2 from uroporphyrinogen III: step 1/1. Its function is as follows. Catalyzes the two successive C-2 and C-7 methylation reactions involved in the conversion of uroporphyrinogen III to precorrin-2 via the intermediate formation of precorrin-1. It is a step in the biosynthesis of both cobalamin (vitamin B12) and coenzyme F430. In Methanocaldococcus jannaschii (strain ATCC 43067 / DSM 2661 / JAL-1 / JCM 10045 / NBRC 100440) (Methanococcus jannaschii), this protein is Uroporphyrinogen-III C-methyltransferase (cobA).